Reading from the N-terminus, the 131-residue chain is Amicyanin (131 aa).

The N-terminal stretch at 1-26 (MISATKIRSCLAACVLAAFGATGALA) is a signal peptide. In terms of domain architecture, Plastocyanin-like spans 27–131 (DKATIPSESP…PFMRGKVVVE (105 aa)). Cu cation is bound by residues H79, C118, H121, and M124.

Cu cation is required as a cofactor.

The protein resides in the periplasm. It participates in one-carbon metabolism; methylamine degradation. Primary acceptor of electrons from methylamine dehydrogenase. Passes those electrons on either a soluble cytochrome c or to pseudoazurin. This is Amicyanin (mauC) from Paracoccus denitrificans.